We begin with the raw amino-acid sequence, 496 residues long: Probable cytosol aminopeptidase (496 aa).

Mn(2+) contacts are provided by K266 and D271. The active site involves K278. D289, D348, and E350 together coordinate Mn(2+). Residue R352 is part of the active site.

The protein belongs to the peptidase M17 family. Requires Mn(2+) as cofactor.

It is found in the cytoplasm. The enzyme catalyses Release of an N-terminal amino acid, Xaa-|-Yaa-, in which Xaa is preferably Leu, but may be other amino acids including Pro although not Arg or Lys, and Yaa may be Pro. Amino acid amides and methyl esters are also readily hydrolyzed, but rates on arylamides are exceedingly low.. The catalysed reaction is Release of an N-terminal amino acid, preferentially leucine, but not glutamic or aspartic acids.. Presumably involved in the processing and regular turnover of intracellular proteins. Catalyzes the removal of unsubstituted N-terminal amino acids from various peptides. The polypeptide is Probable cytosol aminopeptidase (Pseudomonas syringae pv. syringae (strain B728a)).